Reading from the N-terminus, the 198-residue chain is DNA polymerase zeta subunit 2 (198 aa).

An HORMA domain is found at 4 to 196; that stretch reads EIKADIIVEA…DLGLKMDVLI (193 aa).

This sequence belongs to the MAD2 family. As to quaternary structure, accessory subunit of the zeta DNA polymerase complex, which consists of the catalytic component PolZ1/DNApol-zeta and PolZ2/Rev7. Interacts with the apurinic/apyrimidinic (AP) endonuclease Rrp1 (via the N-terminus).

As the accessory component of the DNA polymerase zeta complex, involved in translesion DNA synthesis (TLS) and various DNA repair mechanisms. Promotes the apurinic/apyrimidinic (AP) endonuclease activity of Rrp1 and is therefore likely to be involved in the base excision repair (BER) pathway responsible for repair of DNA lesions. It does not appear to influence the synthesis activity of the catalytic component Dmpol-zeta. In Drosophila melanogaster (Fruit fly), this protein is DNA polymerase zeta subunit 2.